A 274-amino-acid polypeptide reads, in one-letter code: Hematopoietically-expressed homeobox protein hhex (274 aa).

Residues 139-198 (RKGGQVRFSNDQTIELEKKFETQKYLSPPERKRLAKMLQLSERQVKTWFQNRRAKWRRLK) constitute a DNA-binding region (homeobox). The disordered stretch occupies residues 197–274 (LKQENPQGNK…GDKGFYNCAH (78 aa)). A compositionally biased stretch (polar residues) spans 237–248 (DEPTSSPTSQET). Residues 249–263 (LDSEVSDDSDQEVDI) are compositionally biased toward acidic residues.

As to expression, expressed in the most dorsoanterior endomesoderm of the blastula and gastrula embryo, and later is restricted to the forming liver diverticulum.

The protein localises to the nucleus. Functionally, recognizes the DNA sequence 5'-ATTAA-3'. Transcriptional repressor. Regulates the differentiation of both endothelial and blood cells. Probably plays a role in the proliferation of vascular endothelial cells during blood vessel development. Establishes anterior identity at two levels; acts early to enhance canonical wnt-signaling by repressing expression of tle4, and acts later to inhibit nodal-signaling by directly targeting nodal/nr1 and nodal2/nr2. May play a role in liver development. Induces heart development. This chain is Hematopoietically-expressed homeobox protein hhex, found in Xenopus tropicalis (Western clawed frog).